Here is a 435-residue protein sequence, read N- to C-terminus: D-amino acid dehydrogenase (435 aa).

V3–W17 is a binding site for FAD.

This sequence belongs to the DadA oxidoreductase family. The cofactor is FAD.

It carries out the reaction a D-alpha-amino acid + A + H2O = a 2-oxocarboxylate + AH2 + NH4(+). It participates in amino-acid degradation; D-alanine degradation; NH(3) and pyruvate from D-alanine: step 1/1. In terms of biological role, oxidative deamination of D-amino acids. The sequence is that of D-amino acid dehydrogenase from Xylella fastidiosa (strain M23).